The following is a 109-amino-acid chain: Mitochondrial pyruvate carrier 1 (109 aa).

Residue alanine 2 is modified to N-acetylalanine. The Mitochondrial matrix segment spans residues 2-20; sequence AGALVRKAADYVRSKDFRD. Residues 21–41 traverse the membrane as a helical segment; sequence YLMSTHFWGPVANWGLPIAAI. At 42 to 52 the chain is on the mitochondrial intermembrane side; the sequence is NDMKKSPEIIS. Residues 53-71 traverse the membrane as a helical segment; that stretch reads GRMTFALCCYSLTFMRFAY. Position 72 is an N6-acetyllysine (lysine 72). At 72 to 109 the chain is on the mitochondrial matrix side; sequence KVQPRNWLLFACHATNEVAQLIQGGRLIKHEMTKTASA.

Belongs to the mitochondrial pyruvate carrier (MPC) (TC 2.A.105) family. As to quaternary structure, homodimer. Forms heterodimer with MPC2. The heterodimer is the more stable and dominant form.

It is found in the mitochondrion inner membrane. The catalysed reaction is pyruvate(out) + H(+)(out) = pyruvate(in) + H(+)(in). Mediates the uptake of pyruvate into mitochondria. In Homo sapiens (Human), this protein is Mitochondrial pyruvate carrier 1 (MPC1).